We begin with the raw amino-acid sequence, 419 residues long: L-rhamnose isomerase (419 aa).

Residues histidine 262, aspartate 294, and aspartate 296 each contribute to the Mn(2+) site.

It belongs to the rhamnose isomerase family. Homotetramer. It depends on Mn(2+) as a cofactor.

The protein resides in the cytoplasm. It catalyses the reaction L-rhamnopyranose = L-rhamnulose. The protein operates within carbohydrate degradation; L-rhamnose degradation; glycerone phosphate from L-rhamnose: step 1/3. In terms of biological role, catalyzes the interconversion of L-rhamnose and L-rhamnulose. The chain is L-rhamnose isomerase from Enterobacter sp. (strain 638).